Here is a 300-residue protein sequence, read N- to C-terminus: Nucleotide-binding protein Daci_5422 (300 aa).

Residue 10–17 participates in ATP binding; it reads GMSGSGKS. Residue 59–62 coordinates GTP; the sequence is DARS.

It belongs to the RapZ-like family.

Its function is as follows. Displays ATPase and GTPase activities. This chain is Nucleotide-binding protein Daci_5422, found in Delftia acidovorans (strain DSM 14801 / SPH-1).